The chain runs to 210 residues: Somatotropin (210 aa).

The first 22 residues, 1–22 (MGQVFLLMPVLLVSCFLSQGAA), serve as a signal peptide directing secretion. His-38 provides a ligand contact to Zn(2+). A disulfide bridge links Cys-71 with Cys-183. Zn(2+) is bound at residue Glu-192. Cysteines 200 and 208 form a disulfide.

The protein belongs to the somatotropin/prolactin family.

It localises to the secreted. In terms of biological role, growth hormone plays an important role in growth control and is involved in the regulation of several anabolic processes. Implicated as an osmoregulatory substance important for seawater adaptation. The chain is Somatotropin (gh) from Oncorhynchus tshawytscha (Chinook salmon).